Consider the following 266-residue polypeptide: Adaptin ear-binding coat-associated protein 2 (266 aa).

2 disordered regions span residues 165 to 198 and 245 to 266; these read MRKK…KSST and DFTK…WVQF. Ser181 carries the post-translational modification Phosphoserine. 2 short sequence motifs (WXXF motif) span residues 243-246 and 263-266; these read WGDF and WVQF. The span at 249-266 shows a compositional bias: low complexity; it reads STGSPSSQSQPGTGWVQF.

This sequence belongs to the NECAP family. In terms of assembly, interacts with AP1G1 and AP2A1 components of the adapter protein complexes AP-1 and AP-2. Interacts with the GAE domain proteins GGA1, GGA2 and GGA3. As to expression, expressed in brain, heart, kidney, liver, lung, skeletal muscles and testis (at protein level).

It localises to the cytoplasmic vesicle. The protein localises to the clathrin-coated vesicle membrane. Its subcellular location is the cell membrane. In terms of biological role, involved in endocytosis. The chain is Adaptin ear-binding coat-associated protein 2 (Necap2) from Mus musculus (Mouse).